We begin with the raw amino-acid sequence, 280 residues long: Nucleotide-binding protein CV_3336 (280 aa).

8 to 15 serves as a coordination point for ATP; it reads GLSGSGKS. GTP is bound at residue 57–60; sequence DTRS.

The protein belongs to the RapZ-like family.

Displays ATPase and GTPase activities. The protein is Nucleotide-binding protein CV_3336 of Chromobacterium violaceum (strain ATCC 12472 / DSM 30191 / JCM 1249 / CCUG 213 / NBRC 12614 / NCIMB 9131 / NCTC 9757 / MK).